Here is a 1021-residue protein sequence, read N- to C-terminus: Multidrug resistance protein MdtC (1021 aa).

The Cytoplasmic segment spans residues 1–6 (MKFFAL). Residues 7–29 (FIYRPVATILLSVAITLCGILGF) traverse the membrane as a helical segment. Topologically, residues 30 to 335 (RMLPVAPLPQ…TIRASLEEVE (306 aa)) are periplasmic. A helical membrane pass occupies residues 336-353 (QTLIISVALVILVVFLFL). The Cytoplasmic portion of the chain corresponds to 354-359 (RSGRAT). The helical transmembrane segment at 360–379 (IIPAVAVPVSLIGTFAAMYL) threads the bilayer. Over 380–388 (CGFSLNNLS) the chain is Periplasmic. A helical transmembrane segment spans residues 389–411 (LMALTIATGFVVDDAIVVLENIA). Over 412–430 (RHLEAGMKPLQAALQGTRE) the chain is Cytoplasmic. The chain crosses the membrane as a helical span at residues 431 to 453 (VGFTVLSMSLSLVAVFLPLLLMG). The Periplasmic segment spans residues 454 to 467 (GLPGRLLREFAVTL). The chain crosses the membrane as a helical span at residues 468-490 (SVAIGISLLVSLTLTPMMCGWML). At 491–848 (KASKPREQKR…QVFQETMNSQ (358 aa)) the chain is on the cytoplasmic side. Residues 849-871 (VILIIAAIATVYIVLGILYESYV) form a helical membrane-spanning segment. Over 872–890 (HPLTILSTLPSAGVGALLA) the chain is Periplasmic. A helical membrane pass occupies residues 891 to 913 (LELFNAPFSLIALIGIMLLIGIV). The Cytoplasmic segment spans residues 914–943 (KKNAIMMVDFALEAQRHGNLTPQEAIFQAC). The helical transmembrane segment at 944-966 (LLRFRPIMMTTLAALFGALPLVL) threads the bilayer. Over 967-980 (SGGDGSELRQPLEI) the chain is Periplasmic. A helical membrane pass occupies residues 981-1003 (TIVGGLVMSQLLTLYTTPVVYLF). The Cytoplasmic portion of the chain corresponds to 1004–1021 (FDRLRLRFSRKPKQTVTE).

Belongs to the resistance-nodulation-cell division (RND) (TC 2.A.6) family. MdtC subfamily. In terms of assembly, part of a tripartite efflux system composed of MdtA, MdtB and MdtC. MdtC forms a heteromultimer with MdtB.

The protein localises to the cell inner membrane. This chain is Multidrug resistance protein MdtC, found in Shigella flexneri.